A 703-amino-acid polypeptide reads, in one-letter code: Zinc finger CCCH domain-containing protein 36 (703 aa).

4 disordered regions span residues 1-42 (MAGG…DPNG), 112-176 (LQLH…MKNK), 204-242 (VSGS…AGSS), and 442-481 (HGTL…SSSQ). The segment covering 9-25 (GLPAAGEAAKAGRVGVG) has biased composition (low complexity). The span at 112–125 (LQLHGDEKYQKKAG) shows a compositional bias: basic and acidic residues. Polar residues predominate over residues 149-169 (VSQSPPDSNALSSQRFGSSSP). The segment at 176–203 (KTRKRTCTFYAQGRCKNGKSCTFLHEGE) adopts a C3H1-type zinc-finger fold. A compositionally biased stretch (basic and acidic residues) spans 451–468 (TPDKDASHHKGADFDKGG). Over residues 470–481 (SRSTLHVSSSSQ) the composition is skewed to low complexity.

This Oryza sativa subsp. japonica (Rice) protein is Zinc finger CCCH domain-containing protein 36.